We begin with the raw amino-acid sequence, 348 residues long: Chlorophyll(ide) b reductase NOL, chloroplastic (348 aa).

The N-terminal 61 residues, 1–61 (MATWSGFNVS…TRQNLTVTPS (61 aa)), are a transit peptide targeting the chloroplast. 84–108 (ITGSTKGIGYALAREFLKAGDNVVI) provides a ligand contact to NAD(+). Tyrosine 233 functions as the Proton acceptor in the catalytic mechanism.

The protein belongs to the short-chain dehydrogenases/reductases (SDR) family. Interacts with NCY1 to form a complex that acts as a chlorophyll b reductase. Interacts with HCAR, RCCR and the LHCII complex. Part of a SGR1-CCE-LHCII complex, which acts in chlorophyll breakdown.

The protein resides in the plastid. It localises to the chloroplast thylakoid membrane. It carries out the reaction 7(1)-hydroxychlorophyllide a + NAD(+) = chlorophyllide b + NADH + H(+). The catalysed reaction is 7(1)-hydroxychlorophyllide a + NADP(+) = chlorophyllide b + NADPH + H(+). Required for chlorophyll b degradation. Chlorophyll b, chlorophyllide b, pheophorbide b and pheophytin b can be used as substrates. Belongs to the chlorophyll catabolic enzymes (CCEs). This chain is Chlorophyll(ide) b reductase NOL, chloroplastic (NOL), found in Arabidopsis thaliana (Mouse-ear cress).